Reading from the N-terminus, the 387-residue chain is Putative ribosomal RNA large subunit methyltransferase MJ1649 (387 aa).

The PUA domain maps to 5–81; sequence LIKLEIDRRA…EEIDYDFFYK (77 aa).

The protein belongs to the methyltransferase superfamily. RlmI family.

The protein resides in the cytoplasm. The protein is Putative ribosomal RNA large subunit methyltransferase MJ1649 of Methanocaldococcus jannaschii (strain ATCC 43067 / DSM 2661 / JAL-1 / JCM 10045 / NBRC 100440) (Methanococcus jannaschii).